The following is a 210-amino-acid chain: Large ribosomal subunit protein uL4 (210 aa).

Residues 41–52 (QTNARQGTASTK) show a composition bias toward polar residues. The disordered stretch occupies residues 41-71 (QTNARQGTASTKTRAEVRGGGRKPWRQKGTG). The segment covering 60 to 71 (GGRKPWRQKGTG) has biased composition (basic residues).

It belongs to the universal ribosomal protein uL4 family. Part of the 50S ribosomal subunit.

Its function is as follows. One of the primary rRNA binding proteins, this protein initially binds near the 5'-end of the 23S rRNA. It is important during the early stages of 50S assembly. It makes multiple contacts with different domains of the 23S rRNA in the assembled 50S subunit and ribosome. Functionally, forms part of the polypeptide exit tunnel. The chain is Large ribosomal subunit protein uL4 from Nostoc sp. (strain PCC 7120 / SAG 25.82 / UTEX 2576).